The primary structure comprises 155 residues: Large ribosomal subunit protein eL24 (155 aa).

Over residues 97 to 129 (KPEIRKAKRDEKAKADKEKKKADKAARKADKAK) the composition is skewed to basic and acidic residues. The interval 97 to 155 (KPEIRKAKRDEKAKADKEKKKADKAARKADKAKSAATQASKISKQQAKGAFQKVAATSR) is disordered. A compositionally biased stretch (polar residues) spans 133 to 142 (TQASKISKQQ).

Belongs to the eukaryotic ribosomal protein eL24 family.

This is Large ribosomal subunit protein eL24 (RPL24) from Eremothecium gossypii (strain ATCC 10895 / CBS 109.51 / FGSC 9923 / NRRL Y-1056) (Yeast).